The sequence spans 243 residues: 1-(5-phosphoribosyl)-5-[(5-phosphoribosylamino)methylideneamino] imidazole-4-carboxamide isomerase (243 aa).

The active-site Proton acceptor is the Asp-8. Asp-129 serves as the catalytic Proton donor.

Belongs to the HisA/HisF family.

It localises to the cytoplasm. It carries out the reaction 1-(5-phospho-beta-D-ribosyl)-5-[(5-phospho-beta-D-ribosylamino)methylideneamino]imidazole-4-carboxamide = 5-[(5-phospho-1-deoxy-D-ribulos-1-ylimino)methylamino]-1-(5-phospho-beta-D-ribosyl)imidazole-4-carboxamide. The protein operates within amino-acid biosynthesis; L-histidine biosynthesis; L-histidine from 5-phospho-alpha-D-ribose 1-diphosphate: step 4/9. This Nitratidesulfovibrio vulgaris (strain DSM 19637 / Miyazaki F) (Desulfovibrio vulgaris) protein is 1-(5-phosphoribosyl)-5-[(5-phosphoribosylamino)methylideneamino] imidazole-4-carboxamide isomerase.